Here is an 89-residue protein sequence, read N- to C-terminus: HssA/B-like protein 16 (89 aa).

It belongs to the hssA/B family.

In Dictyostelium discoideum (Social amoeba), this protein is HssA/B-like protein 16 (hssl16).